The following is a 337-amino-acid chain: Viral cathepsin (337 aa).

The N-terminal stretch at 1–19 is a signal peptide; sequence MTLLMIFTILLVASSQIEG. A propeptide spans 20-126 (activation peptide); it reads HLKFDIHDAQ…DAPPDVHDEL (107 aa). 3 disulfide bridges follow: C147–C188, C181–C221, and C276–C324. The active site involves C150. N172 is a glycosylation site (N-linked (GlcNAc...) asparagine; by host). Active-site residues include H283 and N303.

Belongs to the peptidase C1 family. In terms of processing, synthesized as an inactive proenzyme and activated by proteolytic removal of the inhibitory propeptide.

The catalysed reaction is Endopeptidase of broad specificity, hydrolyzing substrates of both cathepsin L and cathepsin B.. Its function is as follows. Cysteine protease that plays an essential role in host liquefaction to facilitate horizontal transmission of the virus. May participate in the degradation of foreign protein expressed by the baculovirus system. The protein is Viral cathepsin (VCATH) of Adoxophyes honmai (Smaller tea tortrix moth).